Reading from the N-terminus, the 170-residue chain is Peptide deformylase 2 (170 aa).

Fe cation is bound by residues C94 and H136. E137 is an active-site residue. H140 is a Fe cation binding site.

The protein belongs to the polypeptide deformylase family. Fe(2+) is required as a cofactor.

It carries out the reaction N-terminal N-formyl-L-methionyl-[peptide] + H2O = N-terminal L-methionyl-[peptide] + formate. Its function is as follows. Removes the formyl group from the N-terminal Met of newly synthesized proteins. Requires at least a dipeptide for an efficient rate of reaction. N-terminal L-methionine is a prerequisite for activity but the enzyme has broad specificity at other positions. This is Peptide deformylase 2 from Xanthomonas axonopodis pv. citri (strain 306).